The sequence spans 255 residues: 1-(5-phosphoribosyl)-5-[(5-phosphoribosylamino)methylideneamino] imidazole-4-carboxamide isomerase (255 aa).

Catalysis depends on Asp-12, which acts as the Proton acceptor. The active-site Proton donor is the Asp-131.

Belongs to the HisA/HisF family.

The protein resides in the cytoplasm. The enzyme catalyses 1-(5-phospho-beta-D-ribosyl)-5-[(5-phospho-beta-D-ribosylamino)methylideneamino]imidazole-4-carboxamide = 5-[(5-phospho-1-deoxy-D-ribulos-1-ylimino)methylamino]-1-(5-phospho-beta-D-ribosyl)imidazole-4-carboxamide. Its pathway is amino-acid biosynthesis; L-histidine biosynthesis; L-histidine from 5-phospho-alpha-D-ribose 1-diphosphate: step 4/9. The chain is 1-(5-phosphoribosyl)-5-[(5-phosphoribosylamino)methylideneamino] imidazole-4-carboxamide isomerase from Cutibacterium acnes (strain DSM 16379 / KPA171202) (Propionibacterium acnes).